The chain runs to 517 residues: Ribose import ATP-binding protein RbsA 1 (517 aa).

ABC transporter domains follow at residues 11–251 (LEMR…VGRD) and 263–507 (YDPG…ALAT). An ATP-binding site is contributed by 43–50 (GENGAGKS).

It belongs to the ABC transporter superfamily. Ribose importer (TC 3.A.1.2.1) family. As to quaternary structure, the complex is composed of an ATP-binding protein (RbsA), two transmembrane proteins (RbsC) and a solute-binding protein (RbsB).

It is found in the cell inner membrane. It carries out the reaction D-ribose(out) + ATP + H2O = D-ribose(in) + ADP + phosphate + H(+). Part of the ABC transporter complex RbsABC involved in ribose import. Responsible for energy coupling to the transport system. In Burkholderia cenocepacia (strain HI2424), this protein is Ribose import ATP-binding protein RbsA 1.